The following is a 1018-amino-acid chain: MAGQPTISRFFKKAVKSELTHKQEQEVAVGNGAGSESICLDTDEEDNLSSVASTTVTNDSFPLKGSVSSKNSKNSEKTSGTSTTFNDIDFAKKLDRIMKRRSDENVEAEDDEEEGEEDFVKKKARKSPTAKLTPLDKQVKDLKMHHRDKVLVIRVGYKYKCFAEDAVTVSRILHIKLVPGKLTIDESNPQDCNHRQFAYCSFPDVRLNVHLERLVHHNLKVAVVEQAETSAIKKHDPGASKSSVFERKISNVFTKATFGVNSTFVLRGKRILGDTNSIWALSRDVHQGKVAKYSLISVNLNNGEVVYDEFEEPNLADEKLQIRIKYLQPIEVLVNTDDLPLHVAKFFKDISCPLIHKQEYDLEDHVVQAIKVMNEKIQLSPSLIRLVSKLYSHMVEYNNEQVMLIPSIYSPFASKIHMLLDPNSLQSLDIFTHDGGKGSLFWLLDHTRTSFGLRMLREWILKPLVDVHQIEERLDAIECITSEINNSIFFESLNQMLNHTPDLLRTLNRIMYGTTSRKEVYFYLKQITSFVDHFKMHQSYLSEHFKSSDGRIGKQSPLLFRLFSELNELLSTTQLPHFLTMINVSAVMEKNSDKQVMDFFNLNNYDCSEGIIKIQRESESVRSQLKEELAEIRKYLKRPYLNFRDEVDYLIEVKNSQIKDLPDDWIKVNNTKMVSRFTTPRTQKLTQKLEYYKDLLIRESELQYKEFLNKITAEYTELRKITLNLAQYDCILSLAATSCNVNYVRPTFVNGQQAIIAKNARNPIIESLDVHYVPNDIMMSPENGKINIITGPNMGGKSSYIRQVALLTIMAQIGSFVPAEEIRLSIFENVLTRIGAHDDIINGDSTFKVEMLDILHILKNCNKRSLLLLDEVGRGTGTHDGIAISYALIKYFSELSDCPLILFTTHFPMLGEIKSPLIRNYHMDYVEEQKTGEDWMSVIFLYKLKKGLTYNSYGMNVAKLARLDKDIINRAFSISEELRKESINEDALKLFSSLKRILKSDNITATDKLAKLLSLDIH.

The PIP box motif lies at 4–11 (QPTISRFF). Disordered regions lie at residues 21 to 82 (HKQE…SGTS) and 102 to 127 (SDEN…ARKS). The segment covering 48-60 (LSSVASTTVTNDS) has biased composition (polar residues). The segment covering 64-82 (KGSVSSKNSKNSEKTSGTS) has biased composition (low complexity). Residues 105–117 (NVEAEDDEEEGEE) show a composition bias toward acidic residues. The mispair-binding domain stretch occupies residues 126–256 (KSPTAKLTPL…RKISNVFTKA (131 aa)). 791 to 798 (GPNMGGKS) is a binding site for ATP.

Belongs to the DNA mismatch repair MutS family. MSH3 subfamily. Heterodimer consisting of MSH2-MSH3 (MutS beta). Forms a ternary complex with either MutL alpha (MLH1-PMS1) or MutL beta (MLH1-MLH3). MutS beta interacts with proliferating cell nuclear antigen (PCNA/POL30).

The protein localises to the nucleus. Component of the post-replicative DNA mismatch repair system (MMR). Heterodimerizes with MSH2 to form MutS beta, which binds to DNA mismatches thereby initiating DNA repair. MSH3 provides substrate-binding and substrate specificity to the complex. When bound, the MutS beta heterodimer bends the DNA helix and shields approximately 20 base pairs. Acts mainly to repair insertion-deletion loops (IDLs) from 2 to 13 nucleotides in size, but can also repair base-base and single insertion-deletion mismatches that occur during replication. After mismatch binding, forms a ternary complex with either the MutL alpha or MutL beta heterodimer, which is thought to be responsible for directing the downstream MMR events, including strand discrimination, excision, and resynthesis. MutS beta also has a role in regulation of heteroduplex formation during mitotic and meiotic recombination. MutS beta binds to DNA flap structures predicted to form during recombination, and is required for 3' non-homologous tail removal (NHTR). MutS beta-binding alters the DNA conformation of its substrate at the ds/ssDNA junction and may facilitate its recognition and/or cleavage by the downstream nucleotide excision repair (NER) RAD1-RAD10 endonuclease. ATP binding and hydrolysis play a pivotal role in MMR and NHTR. The sequence is that of DNA mismatch repair protein MSH3 (MSH3) from Saccharomyces cerevisiae (strain YJM789) (Baker's yeast).